The primary structure comprises 447 residues: Phosphoglucosamine mutase (447 aa).

The active-site Phosphoserine intermediate is Ser-102. The Mg(2+) site is built by Ser-102, Asp-241, Asp-243, and Asp-245. Ser-102 is modified (phosphoserine).

It belongs to the phosphohexose mutase family. Mg(2+) serves as cofactor. Post-translationally, activated by phosphorylation.

It carries out the reaction alpha-D-glucosamine 1-phosphate = D-glucosamine 6-phosphate. Its function is as follows. Catalyzes the conversion of glucosamine-6-phosphate to glucosamine-1-phosphate. This is Phosphoglucosamine mutase from Hamiltonella defensa subsp. Acyrthosiphon pisum (strain 5AT).